The primary structure comprises 627 residues: 1-deoxy-D-xylulose-5-phosphate synthase (627 aa).

Thiamine diphosphate-binding positions include His87 and 128-130; that span reads GHS. A Mg(2+)-binding site is contributed by Asp159. Thiamine diphosphate contacts are provided by residues 160 to 161, Asn188, Phe295, and Glu375; that span reads GA. Asn188 contributes to the Mg(2+) binding site.

The protein belongs to the transketolase family. DXPS subfamily. In terms of assembly, homodimer. Mg(2+) is required as a cofactor. Thiamine diphosphate serves as cofactor.

The enzyme catalyses D-glyceraldehyde 3-phosphate + pyruvate + H(+) = 1-deoxy-D-xylulose 5-phosphate + CO2. The protein operates within metabolic intermediate biosynthesis; 1-deoxy-D-xylulose 5-phosphate biosynthesis; 1-deoxy-D-xylulose 5-phosphate from D-glyceraldehyde 3-phosphate and pyruvate: step 1/1. In terms of biological role, catalyzes the acyloin condensation reaction between C atoms 2 and 3 of pyruvate and glyceraldehyde 3-phosphate to yield 1-deoxy-D-xylulose-5-phosphate (DXP). The polypeptide is 1-deoxy-D-xylulose-5-phosphate synthase (Pseudomonas aeruginosa (strain LESB58)).